Consider the following 241-residue polypeptide: Large ribosomal subunit protein uL3 (241 aa).

N5-methylglutamine is present on Q157.

This sequence belongs to the universal ribosomal protein uL3 family. As to quaternary structure, part of the 50S ribosomal subunit. Forms a cluster with proteins L14 and L19. Methylated by PrmB.

One of the primary rRNA binding proteins, it binds directly near the 3'-end of the 23S rRNA, where it nucleates assembly of the 50S subunit. This chain is Large ribosomal subunit protein uL3, found in Vesicomyosocius okutanii subsp. Calyptogena okutanii (strain HA).